We begin with the raw amino-acid sequence, 430 residues long: Adenylosuccinate synthetase (430 aa).

GTP contacts are provided by residues 12–18 (GDEGKGK) and 40–42 (GHT). Aspartate 13 serves as the catalytic Proton acceptor. Residues aspartate 13 and glycine 40 each contribute to the Mg(2+) site. IMP is bound by residues 13 to 16 (DEGK), 38 to 41 (NAGH), threonine 129, arginine 143, glutamine 224, threonine 239, and arginine 303. The Proton donor role is filled by histidine 41. 299–305 (TVSNRER) lines the substrate pocket. GTP contacts are provided by residues arginine 305, 331–333 (KLD), and 413–415 (STG).

Belongs to the adenylosuccinate synthetase family. In terms of assembly, homodimer. Mg(2+) serves as cofactor.

The protein localises to the cytoplasm. The catalysed reaction is IMP + L-aspartate + GTP = N(6)-(1,2-dicarboxyethyl)-AMP + GDP + phosphate + 2 H(+). It functions in the pathway purine metabolism; AMP biosynthesis via de novo pathway; AMP from IMP: step 1/2. Its function is as follows. Plays an important role in the de novo pathway of purine nucleotide biosynthesis. Catalyzes the first committed step in the biosynthesis of AMP from IMP. The chain is Adenylosuccinate synthetase from Ehrlichia ruminantium (strain Welgevonden).